Consider the following 211-residue polypeptide: Uracil phosphoribosyltransferase (211 aa).

Residues Arg78, Arg103, and 130-138 contribute to the 5-phospho-alpha-D-ribose 1-diphosphate site; that span reads DPMLATGAT. Uracil-binding positions include Ile195 and 200–202; that span reads GDA. Asp201 lines the 5-phospho-alpha-D-ribose 1-diphosphate pocket.

This sequence belongs to the UPRTase family. It depends on Mg(2+) as a cofactor.

The catalysed reaction is UMP + diphosphate = 5-phospho-alpha-D-ribose 1-diphosphate + uracil. The protein operates within pyrimidine metabolism; UMP biosynthesis via salvage pathway; UMP from uracil: step 1/1. Its activity is regulated as follows. Allosterically activated by GTP. Catalyzes the conversion of uracil and 5-phospho-alpha-D-ribose 1-diphosphate (PRPP) to UMP and diphosphate. The chain is Uracil phosphoribosyltransferase from Renibacterium salmoninarum (strain ATCC 33209 / DSM 20767 / JCM 11484 / NBRC 15589 / NCIMB 2235).